The chain runs to 358 residues: DNA replication and repair protein RecF (358 aa).

Residue 30 to 37 participates in ATP binding; the sequence is GNNGSGKT.

It belongs to the RecF family.

The protein resides in the cytoplasm. In terms of biological role, the RecF protein is involved in DNA metabolism; it is required for DNA replication and normal SOS inducibility. RecF binds preferentially to single-stranded, linear DNA. It also seems to bind ATP. In Actinobacillus succinogenes (strain ATCC 55618 / DSM 22257 / CCUG 43843 / 130Z), this protein is DNA replication and repair protein RecF.